We begin with the raw amino-acid sequence, 273 residues long: Small ribosomal subunit protein uS2 (273 aa).

The interval 244–273 is disordered; it reads SDEEANSSAEENENRQEDLLAKKYDSSEAN. Basic and acidic residues predominate over residues 255–273; that stretch reads NENRQEDLLAKKYDSSEAN.

Belongs to the universal ribosomal protein uS2 family.

This Chlamydia felis (strain Fe/C-56) (Chlamydophila felis) protein is Small ribosomal subunit protein uS2.